The primary structure comprises 79 residues: RNA-binding protein Hfq (79 aa).

One can recognise a Sm domain in the interval 10-70 (DVFLKTVRKQ…ISTIMPGQPI (61 aa)).

Belongs to the Hfq family. As to quaternary structure, homohexamer.

Functionally, RNA chaperone that binds small regulatory RNA (sRNAs) and mRNAs to facilitate mRNA translational regulation in response to envelope stress, environmental stress and changes in metabolite concentrations. Also binds with high specificity to tRNAs. This chain is RNA-binding protein Hfq, found in Bartonella bacilliformis (strain ATCC 35685 / KC583 / Herrer 020/F12,63).